The chain runs to 649 residues: Transcription factor tau 95 kDa subunit (649 aa).

Positions 1 to 21 (MPVEEPLATLSSIPDSSADQA) are disordered. Residues 9–19 (TLSSIPDSSAD) are compositionally biased toward polar residues. Repeat 1 spans residues 221–239 (PSTDFQLPPPPKLSMVGFP). Residues 221–419 (PSTDFQLPPP…PPLVFESDTP (199 aa)) form a 2 X repeats, Pro-rich region. Positions 296 to 300 (AKKTK) match the Nuclear localization signal motif. Repeat unit 2 spans residues 400–419 (PIVKKNVPKPPPLVFESDTP). The disordered stretch occupies residues 556 to 612 (IAAGDDFDDNGAITEEPDDAALENEEMDTDQNLKVPASIDDDVDDVDADEEEQESFD). 2 stretches are compositionally biased toward acidic residues: residues 560–584 (DDFDDNGAITEEPDDAALENEEMDT) and 594–610 (IDDDVDDVDADEEEQES). S617 is modified (phosphoserine).

This sequence belongs to the TFIIIC subunit 5 family. As to quaternary structure, component of the TFIIIC complex composed of TFC1, TFC3, TFC4, TFC6, TFC7 and TFC8. The subunits are organized in two globular domains, tauA and tauB, connected by a proteolysis-sensitive and flexible linker. Interacts with TFC3, TFC4 and TFC6.

The protein resides in the nucleus. TFIIIC mediates tRNA and 5S RNA gene activation by binding to intragenic promoter elements. Upstream of the transcription start site, TFIIIC assembles the initiation complex TFIIIB-TFIIIC-tDNA, which is sufficient for RNA polymerase III recruitment and function. Part of the tauA domain of TFIIIC that binds boxA DNA promoter sites of tRNA and similar genes. Participates in the interconnection of tauA with tauB via its contacts with TFC3 and TFC6. Serves as a scaffold critical for tauA-DNA spatial configuration and tauB-DNA stability. The polypeptide is Transcription factor tau 95 kDa subunit (TFC1) (Saccharomyces cerevisiae (strain ATCC 204508 / S288c) (Baker's yeast)).